The primary structure comprises 320 residues: 1-aminocyclopropane-1-carboxylate oxidase (320 aa).

The 101-residue stretch at 154–254 folds into the Fe2OG dioxygenase domain; that stretch reads PTFGTKVSNY…RMSLASFYNP (101 aa). Fe cation is bound by residues His-178, Asp-180, and His-235.

Belongs to the iron/ascorbate-dependent oxidoreductase family. Requires Fe cation as cofactor.

It catalyses the reaction 1-aminocyclopropane-1-carboxylate + L-ascorbate + O2 = ethene + L-dehydroascorbate + hydrogen cyanide + CO2 + 2 H2O. The protein operates within alkene biosynthesis; ethylene biosynthesis via S-adenosyl-L-methionine; ethylene from S-adenosyl-L-methionine: step 2/2. The chain is 1-aminocyclopropane-1-carboxylate oxidase (ACO) from Persea americana (Avocado).